A 58-amino-acid chain; its full sequence is Sec-independent protein translocase protein TatA (58 aa).

Residues 1-21 form a helical membrane-spanning segment; it reads MLSNIGFPGLILILVAILILF.

The protein belongs to the TatA/E family. Forms a complex with TatC.

It localises to the cell membrane. Its function is as follows. Part of the twin-arginine translocation (Tat) system that transports large folded proteins containing a characteristic twin-arginine motif in their signal peptide across membranes. TatA could form the protein-conducting channel of the Tat system. This chain is Sec-independent protein translocase protein TatA, found in Bacillus cytotoxicus (strain DSM 22905 / CIP 110041 / 391-98 / NVH 391-98).